The sequence spans 827 residues: Leucine--tRNA ligase (827 aa).

The 'HIGH' region motif lies at Pro42–His52. Residues Lys583–Ser587 carry the 'KMSKS' region motif. Lys586 is an ATP binding site.

This sequence belongs to the class-I aminoacyl-tRNA synthetase family.

The protein resides in the cytoplasm. It carries out the reaction tRNA(Leu) + L-leucine + ATP = L-leucyl-tRNA(Leu) + AMP + diphosphate. The polypeptide is Leucine--tRNA ligase (Desulfitobacterium hafniense (strain DSM 10664 / DCB-2)).